The chain runs to 493 residues: MPLYSVTVKWGKEKFEGVELNTDEPPMVFKAQLFALTGVQPARQKVMVKGGTLKDDDWGNIKMKNGMTVLMMGSADALPEEPSAKTVFVEDMTEEQLATAMELPCGLTNLGNTCYMNATVQCIRSVPELKDALKRYAGALRASGEMASAQYITAALRDLFDSMDKTSSSIPPIILLQFLHMAFPQFAEKGEQGQYLQQDANECWIQMMRVLQQKLEAIEDDSGRETDSSSAPAVTPSKKKSLIDQYFGVEFETTMKCTESEEEEVTKGKENQLQLSCFINQEVKYLFTGLKLRLQEEITKQSPTLQRNALYIKSSKISRLPAYLTIQMVRFFYKEKESVNAKVLKDVKFPLMLDVYELCTPELQEKMVSFRSKFKDLEDKKVNQQPNANDKNSPPKEIKYEPFSFADDIGSNNCGYYDLQAVLTHQGRSSSSGHYVSWVRRKQDEWIKFDDDKVSIVTPEDILRLSGGGDWHIAYVLLYGPRRVEIMEEESEQ.

The region spanning 4–80 (YSVTVKWGKE…MMGSADALPE (77 aa)) is the Ubiquitin-like domain. Thr52 bears the Phosphothreonine mark. One can recognise a USP domain in the interval 105 to 482 (CGLTNLGNTC…IAYVLLYGPR (378 aa)). The active-site Nucleophile is the Cys114. Residues Ser143 and Ser148 each carry the phosphoserine modification. A Phosphothreonine modification is found at Thr235. 3 positions are modified to phosphoserine: Ser237, Ser302, and Ser431. His434 functions as the Proton acceptor in the catalytic mechanism. The residue at position 448 (Lys448) is an N6-acetyllysine.

Belongs to the peptidase C19 family. USP14/UBP6 subfamily. As to quaternary structure, homodimer (Potential). Associates with the 26S proteasome. Interacts with FANCC, CXCR4 and ERN1. Interacts with TRIM14; this interaction recruits USP14 to cleave ubiquitin chains of CGAS and KDM4D.

The protein localises to the cytoplasm. Its subcellular location is the cell membrane. It catalyses the reaction Thiol-dependent hydrolysis of ester, thioester, amide, peptide and isopeptide bonds formed by the C-terminal Gly of ubiquitin (a 76-residue protein attached to proteins as an intracellular targeting signal).. Functionally, proteasome-associated deubiquitinase which releases ubiquitin from the proteasome targeted ubiquitinated proteins. Ensures the regeneration of ubiquitin at the proteasome. Is a reversibly associated subunit of the proteasome and a large fraction of proteasome-free protein exists within the cell. Required for the degradation of the chemokine receptor CXCR4 which is critical for CXCL12-induced cell chemotaxis. Also serves as a physiological inhibitor of endoplasmic reticulum-associated degradation (ERAD) under the non-stressed condition by inhibiting the degradation of unfolded endoplasmic reticulum proteins via interaction with ERN1. Indispensable for synaptic development and function at neuromuscular junctions (NMJs). Plays a role in the innate immune defense against viruses by stabilizing the viral DNA sensor CGAS and thus inhibiting its autophagic degradation. Inhibits OPTN-mediated selective autophagic degradation of KDM4D and thereby negatively regulates H3K9me2 and H3K9me3. In Mus musculus (Mouse), this protein is Ubiquitin carboxyl-terminal hydrolase 14 (Usp14).